The chain runs to 557 residues: Probable transcription factor sol4 (557 aa).

Residues 26 to 186 are fungal transcription factor domain; that stretch reads IQYFFEDINW…EREMRRRMFC (161 aa). The interval 463 to 490 is disordered; the sequence is SGTQTRSMPSTETLTYNSSSSTSYGDGH. A compositionally biased stretch (low complexity) spans 472–485; it reads STETLTYNSSSSTS.

It localises to the nucleus. Its function is as follows. Probable transcription factor that regulates the expression of the gene cluster that mediates the biosynthesis of the phytotoxin solanapyrone, a causal agent of early blight disease of potato and tomato. The sequence is that of Probable transcription factor sol4 (sol4) from Alternaria solani.